We begin with the raw amino-acid sequence, 364 residues long: Histidinol-phosphate aminotransferase 1 (364 aa).

At Lys211 the chain carries N6-(pyridoxal phosphate)lysine.

It belongs to the class-II pyridoxal-phosphate-dependent aminotransferase family. Histidinol-phosphate aminotransferase subfamily. Homodimer. Pyridoxal 5'-phosphate serves as cofactor.

It carries out the reaction L-histidinol phosphate + 2-oxoglutarate = 3-(imidazol-4-yl)-2-oxopropyl phosphate + L-glutamate. The protein operates within amino-acid biosynthesis; L-histidine biosynthesis; L-histidine from 5-phospho-alpha-D-ribose 1-diphosphate: step 7/9. This Legionella pneumophila (strain Paris) protein is Histidinol-phosphate aminotransferase 1.